Reading from the N-terminus, the 406-residue chain is Riboflavin biosynthesis protein RibBA (406 aa).

A DHBP synthase region spans residues 1–209; it reads MSEREEFKFN…IADLIKYRLR (209 aa). D-ribulose 5-phosphate-binding positions include 33–34, Asp-38, 148–152, and Glu-172; these read RE and RAGHT. Glu-34 serves as a coordination point for Mg(2+). Position 151 (His-151) interacts with Mg(2+). Positions 210–406 are GTP cyclohydrolase II; the sequence is RETLVEKVAS…VKKDKLGHMF (197 aa). 260–264 is a GTP binding site; sequence RVHSE. Cys-265, Cys-276, and Cys-278 together coordinate Zn(2+). GTP-binding positions include Gln-281, 304 to 306, and Thr-326; that span reads EGR. The active-site Proton acceptor; for GTP cyclohydrolase activity is Asp-338. Catalysis depends on Arg-340, which acts as the Nucleophile; for GTP cyclohydrolase activity. Positions 361 and 366 each coordinate GTP.

This sequence in the N-terminal section; belongs to the DHBP synthase family. In the C-terminal section; belongs to the GTP cyclohydrolase II family. Mg(2+) serves as cofactor. It depends on Mn(2+) as a cofactor. Zn(2+) is required as a cofactor.

The enzyme catalyses D-ribulose 5-phosphate = (2S)-2-hydroxy-3-oxobutyl phosphate + formate + H(+). It carries out the reaction GTP + 4 H2O = 2,5-diamino-6-hydroxy-4-(5-phosphoribosylamino)-pyrimidine + formate + 2 phosphate + 3 H(+). Its pathway is cofactor biosynthesis; riboflavin biosynthesis; 2-hydroxy-3-oxobutyl phosphate from D-ribulose 5-phosphate: step 1/1. The protein operates within cofactor biosynthesis; riboflavin biosynthesis; 5-amino-6-(D-ribitylamino)uracil from GTP: step 1/4. In terms of biological role, catalyzes the conversion of D-ribulose 5-phosphate to formate and 3,4-dihydroxy-2-butanone 4-phosphate. Catalyzes the conversion of GTP to 2,5-diamino-6-ribosylamino-4(3H)-pyrimidinone 5'-phosphate (DARP), formate and pyrophosphate. The chain is Riboflavin biosynthesis protein RibBA from Aquifex aeolicus (strain VF5).